The primary structure comprises 101 residues: UPF0125 protein VC_0850 (101 aa).

The protein belongs to the UPF0125 (RnfH) family.

The sequence is that of UPF0125 protein VC_0850 from Vibrio cholerae serotype O1 (strain ATCC 39315 / El Tor Inaba N16961).